A 58-amino-acid polypeptide reads, in one-letter code: ATP synthase F(0) complex subunit k, mitochondrial (58 aa).

An N6-acetyllysine; partial mark is found at lysine 16 and lysine 17. Residues 23–45 (TLTGRMNCVLATYGSIALIVLYF) form a helical membrane-spanning segment.

As to quaternary structure, component of the ATP synthase complex composed at least of ATP5F1A/subunit alpha, ATP5F1B/subunit beta, ATP5MC1/subunit c (homooctomer), MT-ATP6/subunit a, MT-ATP8/subunit 8, ATP5ME/subunit e, ATP5MF/subunit f, ATP5MG/subunit g, ATP5MK/subunit k, ATP5MJ/subunit j, ATP5F1C/subunit gamma, ATP5F1D/subunit delta, ATP5F1E/subunit epsilon, ATP5PF/subunit F6, ATP5PB/subunit b, ATP5PD/subunit d, ATP5PO/subunit OSCP. ATP synthase complex consists of a soluble F(1) head domain (subunits alpha(3) and beta(3)) - the catalytic core - and a membrane F(0) domain - the membrane proton channel (subunits c, a, 8, e, f, g, k and j). These two domains are linked by a central stalk (subunits gamma, delta, and epsilon) rotating inside the F1 region and a stationary peripheral stalk (subunits F6, b, d, and OSCP). The ATP synthase complex/complex V exists as a monomeric and a dimeric supercomplex that helps shape mitochondrial cristae to optimize proton flow.

Its subcellular location is the mitochondrion membrane. Its function is as follows. Subunit k, of the mitochondrial membrane ATP synthase complex (F(1)F(0) ATP synthase or Complex V) that produces ATP from ADP in the presence of a proton gradient across the membrane which is generated by electron transport complexes of the respiratory chain. ATP synthase complex consist of a soluble F(1) head domain - the catalytic core - and a membrane F(1) domain - the membrane proton channel. These two domains are linked by a central stalk rotating inside the F(1) region and a stationary peripheral stalk. During catalysis, ATP synthesis in the catalytic domain of F(1) is coupled via a rotary mechanism of the central stalk subunits to proton translocation. In vivo, can only synthesize ATP although its ATP hydrolase activity can be activated artificially in vitro. Part of the complex F(0) domain. Required for dimerization of the ATP synthase complex and as such regulates ATP synthesis in the mitochondria. The polypeptide is ATP synthase F(0) complex subunit k, mitochondrial (Bos taurus (Bovine)).